A 285-amino-acid polypeptide reads, in one-letter code: Extracellular metalloprotease NCU07200 (285 aa).

The N-terminal stretch at M1–G18 is a signal peptide. Zn(2+) is bound at residue H197. E198 is an active-site residue. H201 lines the Zn(2+) pocket. A disulfide bridge connects residues C233 and C260. The N-linked (GlcNAc...) asparagine glycan is linked to N282.

Belongs to the peptidase M43B family.

The protein resides in the secreted. In terms of biological role, secreted metalloproteinase that allows assimilation of proteinaceous substrates. In Neurospora crassa (strain ATCC 24698 / 74-OR23-1A / CBS 708.71 / DSM 1257 / FGSC 987), this protein is Extracellular metalloprotease NCU07200.